A 526-amino-acid polypeptide reads, in one-letter code: Glutamate--tRNA ligase, mitochondrial (526 aa).

A mitochondrion-targeting transit peptide spans M1 to F38. R37–A39 serves as a coordination point for L-glutamate. Residues P42–S50 carry the 'HIGH' region motif. ATP is bound at residue H47. Residues E73, Y222–N226, and R240 each bind L-glutamate. ATP contacts are provided by residues E243 and K278 to R282. The 'KMSKS' region signature appears at K278–R282.

It belongs to the class-I aminoacyl-tRNA synthetase family. Glutamate--tRNA ligase type 1 subfamily.

It is found in the mitochondrion. The enzyme catalyses tRNA(Glu) + L-glutamate + ATP = L-glutamyl-tRNA(Glu) + AMP + diphosphate. Its function is as follows. Catalyzes the attachment of glutamate to tRNA(Glu) in a two-step reaction: glutamate is first activated by ATP to form Glu-AMP and then transferred to the acceptor end of tRNA(Glu). The protein is Glutamate--tRNA ligase, mitochondrial (mse1) of Schizosaccharomyces pombe (strain 972 / ATCC 24843) (Fission yeast).